The following is a 228-amino-acid chain: MERVKMINVQRLLEAAEFLERRERECEHGYASSFPSMPSPRLQHSKPPRRLSRAQKHSSGSSNTSTANRSTHNELEKNRRAHLRLCLERLKVLIPLGPDCTRHTTLGLLNKAKAHIKKLEEAERKSQHQLENLEREQRFLKWRLEQLQGPQEMERIRMDSIGSTISSDRSDSEREEIEVDVESTEFSHGEVDNISTTSISDIDDHSSLPSIGSDEGYSSASVKLSFTS.

Disordered regions lie at residues 29–76 and 161–228; these read GYAS…NELE and IGST…SFTS. The span at 43–56 shows a compositional bias: basic residues; it reads QHSKPPRRLSRAQK. Positions 57–70 are enriched in polar residues; the sequence is HSSGSSNTSTANRS. Residues 67–119 enclose the bHLH domain; the sequence is ANRSTHNELEKNRRAHLRLCLERLKVLIPLGPDCTRHTTLGLLNKAKAHIKKL. Over residues 173-183 the composition is skewed to acidic residues; that stretch reads EREEIEVDVES. A compositionally biased stretch (polar residues) spans 216 to 228; it reads GYSSASVKLSFTS.

As to quaternary structure, interacts with SMC3. Efficient DNA binding requires dimerization with another bHLH protein. Binds DNA as a heterodimer with MAX. Interacts with RNF17. In terms of tissue distribution, high levels found in the brain, heart and lung while lower levels are seen in the liver, kidney and skeletal muscle.

It localises to the nucleus. In terms of biological role, transcriptional repressor. MXI1 binds with MAX to form a sequence-specific DNA-binding protein complex which recognizes the core sequence 5'-CAC[GA]TG-3'. MXI1 thus antagonizes MYC transcriptional activity by competing for MAX. The chain is Max-interacting protein 1 (MXI1) from Homo sapiens (Human).